Here is a 262-residue protein sequence, read N- to C-terminus: Adenosylcobinamide-GDP ribazoletransferase (262 aa).

The next 6 membrane-spanning stretches (helical) occupy residues 43–63 (YFGLVGLLIGLLSAIVFWLTQ), 66–86 (LPAGVSVLLAMLVGVLLTGGF), 120–140 (GAIALILALLLKWQLLVELAL), 146–166 (AGSALIVAHTVSRVVAASIIF), 191–211 (LFILVASGVLVLLFLKGLAAL), and 242–262 (AAQQICEIVCYLVLLIVGSIL).

It belongs to the CobS family. Mg(2+) is required as a cofactor.

The protein localises to the cell inner membrane. The catalysed reaction is alpha-ribazole + adenosylcob(III)inamide-GDP = adenosylcob(III)alamin + GMP + H(+). It carries out the reaction alpha-ribazole 5'-phosphate + adenosylcob(III)inamide-GDP = adenosylcob(III)alamin 5'-phosphate + GMP + H(+). It participates in cofactor biosynthesis; adenosylcobalamin biosynthesis; adenosylcobalamin from cob(II)yrinate a,c-diamide: step 7/7. In terms of biological role, joins adenosylcobinamide-GDP and alpha-ribazole to generate adenosylcobalamin (Ado-cobalamin). Also synthesizes adenosylcobalamin 5'-phosphate from adenosylcobinamide-GDP and alpha-ribazole 5'-phosphate. This chain is Adenosylcobinamide-GDP ribazoletransferase, found in Shewanella putrefaciens (strain CN-32 / ATCC BAA-453).